The primary structure comprises 254 residues: Probable membrane transporter protein YjnA (254 aa).

6 consecutive transmembrane segments (helical) span residues 5 to 25, 75 to 95, 105 to 125, 143 to 163, 187 to 207, and 209 to 229; these read IILMGLFVGALVGLTGVGGAA, AIGSIPSASLAIGILHLFPAF, HALGYVLTLVAISIIVRLFLD, ALTILIGVVFGFIVGLTSIGS, IAHAFLLVTAAGILNASFGSV, and YMLAANLLLGSIPGVLIGSHL.

This sequence belongs to the 4-toluene sulfonate uptake permease (TSUP) (TC 2.A.102) family.

It is found in the cell membrane. This Bacillus subtilis (strain 168) protein is Probable membrane transporter protein YjnA (yjnA).